The sequence spans 265 residues: tRNA pseudouridine synthase A (265 aa).

The active-site Nucleophile is Asp53. A substrate-binding site is contributed by Tyr111.

It belongs to the tRNA pseudouridine synthase TruA family. In terms of assembly, homodimer.

It carries out the reaction uridine(38/39/40) in tRNA = pseudouridine(38/39/40) in tRNA. Formation of pseudouridine at positions 38, 39 and 40 in the anticodon stem and loop of transfer RNAs. This Acinetobacter baumannii (strain AB307-0294) protein is tRNA pseudouridine synthase A.